We begin with the raw amino-acid sequence, 203 residues long: Auxin-responsive protein IAA4 (203 aa).

Positions M1 to T31 are disordered. The span at S10 to T31 shows a compositional bias: low complexity. The short motif at L40–L44 is the EAR-like (transcriptional repression) element. Residues T108–K202 form the PB1 domain.

Belongs to the Aux/IAA family. As to quaternary structure, homodimers and heterodimers.

The protein resides in the nucleus. Aux/IAA proteins are short-lived transcriptional factors that function as repressors of early auxin response genes at low auxin concentrations. The protein is Auxin-responsive protein IAA4 (IAA4) of Oryza sativa subsp. japonica (Rice).